A 376-amino-acid chain; its full sequence is PqqA peptide cyclase (376 aa).

Residues 7–222 (VGLPLWLLAE…TNEYRDKLKA (216 aa)) enclose the Radical SAM core domain. [4Fe-4S] cluster is bound by residues Cys21, Cys25, and Cys28.

This sequence belongs to the radical SAM superfamily. PqqE family. As to quaternary structure, interacts with PqqD. The interaction is necessary for activity of PqqE. It depends on [4Fe-4S] cluster as a cofactor.

It carries out the reaction [PQQ precursor protein] + S-adenosyl-L-methionine = E-Y cross-linked-[PQQ precursor protein] + 5'-deoxyadenosine + L-methionine + H(+). The protein operates within cofactor biosynthesis; pyrroloquinoline quinone biosynthesis. Functionally, catalyzes the cross-linking of a glutamate residue and a tyrosine residue in the PqqA protein as part of the biosynthesis of pyrroloquinoline quinone (PQQ). This chain is PqqA peptide cyclase, found in Pseudomonas putida (strain ATCC 47054 / DSM 6125 / CFBP 8728 / NCIMB 11950 / KT2440).